The following is a 105-amino-acid chain: Nucleoid-associated protein RPC_4847 (105 aa).

This sequence belongs to the YbaB/EbfC family. As to quaternary structure, homodimer.

It localises to the cytoplasm. Its subcellular location is the nucleoid. In terms of biological role, binds to DNA and alters its conformation. May be involved in regulation of gene expression, nucleoid organization and DNA protection. In Rhodopseudomonas palustris (strain BisB18), this protein is Nucleoid-associated protein RPC_4847.